A 96-amino-acid chain; its full sequence is SAGA-associated factor 11 (96 aa).

An SGF11-type zinc finger spans residues phenylalanine 68–cysteine 89.

Belongs to the SGF11 family. In terms of assembly, component of the 1.8 MDa SAGA transcription coactivator-HAT complex. SAGA is built of 5 distinct domains with specialized functions. Within the SAGA complex, SUS1, SGF11, SGF73 and UBP8 form an additional subcomplex of SAGA called the DUB module (deubiquitination module). Interacts directly with SGF73, SUS1 and UBP8.

The protein localises to the nucleus. Functionally, functions as a component of the transcription regulatory histone acetylation (HAT) complex SAGA. At the promoters, SAGA is required for recruitment of the basal transcription machinery. It influences RNA polymerase II transcriptional activity through different activities such as TBP interaction and promoter selectivity, interaction with transcription activators, and chromatin modification through histone acetylation and deubiquitination. SAGA acetylates nucleosomal histone H3 to some extent (to form H3K9ac, H3K14ac, H3K18ac and H3K23ac). SAGA interacts with DNA via upstream activating sequences (UASs). Involved in transcriptional regulation of a subset of SAGA-regulated genes. Within the SAGA complex, participates in a subcomplex, that specifically deubiquitinates histones H2B. The sequence is that of SAGA-associated factor 11 from Vanderwaltozyma polyspora (strain ATCC 22028 / DSM 70294 / BCRC 21397 / CBS 2163 / NBRC 10782 / NRRL Y-8283 / UCD 57-17) (Kluyveromyces polysporus).